The sequence spans 479 residues: Replication factor C large subunit (479 aa).

50 to 57 is an ATP binding site; the sequence is GPPGSGKT. A compositionally biased stretch (basic and acidic residues) spans 420-468; sequence EKIRKERKEEEKVEVREEKPEEKVEEKREERETKKEKEKKEEKKAEKKG. The tract at residues 420–479 is disordered; that stretch reads EKIRKERKEEEKVEVREEKPEEKVEEKREERETKKEKEKKEEKKAEKKGKQVTLFDFIKK.

The protein belongs to the activator 1 small subunits family. RfcL subfamily. Heterohexamer composed of four small subunits (RfcS) and two large subunits (RfcL).

Its function is as follows. Part of the RFC clamp loader complex which loads the PCNA sliding clamp onto DNA. The complex possesses DNA-independent ATPase activity. The chain is Replication factor C large subunit (rfcL) from Pyrococcus abyssi (strain GE5 / Orsay).